A 127-amino-acid chain; its full sequence is Anti-adapter protein IraD (127 aa).

Belongs to the GpW/Gp25 family. IraD subfamily. Interacts with RssB.

It localises to the cytoplasm. Functionally, inhibits RpoS proteolysis by regulating RssB activity, thereby increasing the stability of the sigma stress factor RpoS during oxidative stress. Its effect on RpoS stability is due to its interaction with RssB, which probably blocks the interaction of RssB with RpoS, and the consequent delivery of the RssB-RpoS complex to the ClpXP protein degradation pathway. This is Anti-adapter protein IraD from Escherichia coli O6:K15:H31 (strain 536 / UPEC).